Consider the following 232-residue polypeptide: 2-C-methyl-D-erythritol 4-phosphate cytidylyltransferase (232 aa).

Belongs to the IspD/TarI cytidylyltransferase family. IspD subfamily.

The catalysed reaction is 2-C-methyl-D-erythritol 4-phosphate + CTP + H(+) = 4-CDP-2-C-methyl-D-erythritol + diphosphate. It participates in isoprenoid biosynthesis; isopentenyl diphosphate biosynthesis via DXP pathway; isopentenyl diphosphate from 1-deoxy-D-xylulose 5-phosphate: step 2/6. Functionally, catalyzes the formation of 4-diphosphocytidyl-2-C-methyl-D-erythritol from CTP and 2-C-methyl-D-erythritol 4-phosphate (MEP). The sequence is that of 2-C-methyl-D-erythritol 4-phosphate cytidylyltransferase from Stenotrophomonas maltophilia (strain R551-3).